Reading from the N-terminus, the 100-residue chain is MRSFLYGVLAFAVLARSSAVAAFPIPDESRPLSKTSPDTVAPRSLRIEAQEVIQSGRGDGYGGFWKNVAQSTNKIVKRPDIKIGKLIEAAKKAKAKMTKS.

An N-terminal signal peptide occupies residues 1 to 22 (MRSFLYGVLAFAVLARSSAVAA). The RxLR-dEER signature appears at 43–57 (RSLRIEAQEVIQSGR). The Calmodulin-binding motif motif lies at 78–82 (RPDIK).

The protein belongs to the RxLR effector family. As to quaternary structure, interacts with the host papain-like cysteine protease C14. Interacts with the host calmodulin.

The protein localises to the secreted. It is found in the host cell membrane. Its function is as follows. Secreted effector that acts as an elicitor of hypersensitive response (HR) specifically on plants carrying defense protein Rpi-blb2. Enhances P.infestans colonization of Nicotiana benthamiana leaves. Interacts with, and subsequently prevents secretion into the apoplast of the host papain-like cysteine protease C14, thus promoting virulence by interfering with the execution of host defenses. Associates with calmodulin at the host plasma membrane to interfere with plant defense-associated calcium signaling in hosts. The protein is RxLR effector protein Avrblb2 of Phytophthora infestans (strain T30-4) (Potato late blight agent).